We begin with the raw amino-acid sequence, 210 residues long: Na(+)-translocating NADH-quinone reductase subunit D (210 aa).

6 helical membrane passes run P14–V34, L42–L62, I72–A92, V103–M123, F131–V151, and N178–I198.

This sequence belongs to the NqrDE/RnfAE family. In terms of assembly, composed of six subunits; NqrA, NqrB, NqrC, NqrD, NqrE and NqrF.

It is found in the cell inner membrane. The catalysed reaction is a ubiquinone + n Na(+)(in) + NADH + H(+) = a ubiquinol + n Na(+)(out) + NAD(+). NQR complex catalyzes the reduction of ubiquinone-1 to ubiquinol by two successive reactions, coupled with the transport of Na(+) ions from the cytoplasm to the periplasm. NqrA to NqrE are probably involved in the second step, the conversion of ubisemiquinone to ubiquinol. This Shewanella woodyi (strain ATCC 51908 / MS32) protein is Na(+)-translocating NADH-quinone reductase subunit D.